A 460-amino-acid polypeptide reads, in one-letter code: Glycogen synthase (460 aa).

K15 provides a ligand contact to ADP-alpha-D-glucose.

The protein belongs to the glycosyltransferase 1 family. Bacterial/plant glycogen synthase subfamily.

It catalyses the reaction [(1-&gt;4)-alpha-D-glucosyl](n) + ADP-alpha-D-glucose = [(1-&gt;4)-alpha-D-glucosyl](n+1) + ADP + H(+). It functions in the pathway glycan biosynthesis; glycogen biosynthesis. Synthesizes alpha-1,4-glucan chains using ADP-glucose. This is Glycogen synthase from Trichodesmium erythraeum (strain IMS101).